A 451-amino-acid chain; its full sequence is Adenylyltransferase and sulfurtransferase MOCS3 (451 aa).

The interval 42 to 62 (GEDSDEAEESSNDMPTPQTKL) is disordered. Residues 43–52 (EDSDEAEESS) are compositionally biased toward acidic residues. Thr-60 bears the Phosphothreonine mark. ATP contacts are provided by residues Gly-99, Asp-120, 127–131 (SNLHR), Lys-144, and 188–189 (DN). Residues Cys-229 and Cys-232 each contribute to the Zn(2+) site. Cys-246 (glycyl thioester intermediate; for adenylyltransferase activity) is an active-site residue. Zn(2+) is bound by residues Cys-304 and Cys-307. A Rhodanese domain is found at 353 to 449 (QSQPHLLLDV…WTGSVDATFP (97 aa)). The Cysteine persulfide intermediate; for sulfurtransferase activity role is filled by Cys-408.

In the N-terminal section; belongs to the HesA/MoeB/ThiF family. UBA4 subfamily. It depends on Zn(2+) as a cofactor.

The protein resides in the cytoplasm. It is found in the cytosol. The enzyme catalyses [molybdopterin-synthase sulfur-carrier protein]-C-terminal Gly-Gly + ATP + H(+) = [molybdopterin-synthase sulfur-carrier protein]-C-terminal Gly-Gly-AMP + diphosphate. The catalysed reaction is [molybdopterin-synthase sulfur-carrier protein]-C-terminal Gly-Gly-AMP + S-sulfanyl-L-cysteinyl-[cysteine desulfurase] + AH2 = [molybdopterin-synthase sulfur-carrier protein]-C-terminal-Gly-aminoethanethioate + L-cysteinyl-[cysteine desulfurase] + A + AMP + 2 H(+). It participates in tRNA modification; 5-methoxycarbonylmethyl-2-thiouridine-tRNA biosynthesis. Its pathway is cofactor biosynthesis; molybdopterin biosynthesis. Functionally, plays a central role in 2-thiolation of mcm(5)S(2)U at tRNA wobble positions of cytosolic tRNA(Lys), tRNA(Glu) and tRNA(Gln). Also essential during biosynthesis of the molybdenum cofactor. Acts by mediating the C-terminal thiocarboxylation of sulfur carriers URM1 and MOCS2A. Its N-terminus first activates URM1 and MOCS2A as acyl-adenylates (-COAMP), then the persulfide sulfur on the catalytic cysteine is transferred to URM1 and MOCS2A to form thiocarboxylation (-COSH) of their C-terminus. The reaction probably involves hydrogen sulfide that is generated from the persulfide intermediate and that acts as a nucleophile towards URM1 and MOCS2A. Subsequently, a transient disulfide bond is formed. Does not use thiosulfate as sulfur donor; NFS1 probably acting as a sulfur donor for thiocarboxylation reactions. This chain is Adenylyltransferase and sulfurtransferase MOCS3, found in Drosophila persimilis (Fruit fly).